The sequence spans 525 residues: GMP synthase [glutamine-hydrolyzing] (525 aa).

One can recognise a Glutamine amidotransferase type-1 domain in the interval 9-207 (RILILDFGSQ…VKEICHCEAL (199 aa)). C86 acts as the Nucleophile in catalysis. Active-site residues include H181 and E183. The 193-residue stretch at 208 to 400 (WTPATIIEDA…LGLPYNMLYR (193 aa)) folds into the GMPS ATP-PPase domain. Residue 235-241 (SGGVDSS) coordinates ATP.

As to quaternary structure, homodimer.

It carries out the reaction XMP + L-glutamine + ATP + H2O = GMP + L-glutamate + AMP + diphosphate + 2 H(+). Its pathway is purine metabolism; GMP biosynthesis; GMP from XMP (L-Gln route): step 1/1. Catalyzes the synthesis of GMP from XMP. This is GMP synthase [glutamine-hydrolyzing] from Tolumonas auensis (strain DSM 9187 / NBRC 110442 / TA 4).